We begin with the raw amino-acid sequence, 142 residues long: Large ribosomal subunit protein uL13 (142 aa).

This sequence belongs to the universal ribosomal protein uL13 family. As to quaternary structure, part of the 50S ribosomal subunit.

This protein is one of the early assembly proteins of the 50S ribosomal subunit, although it is not seen to bind rRNA by itself. It is important during the early stages of 50S assembly. This Xylella fastidiosa (strain M23) protein is Large ribosomal subunit protein uL13.